The following is a 377-amino-acid chain: Probable protein phosphatase 2C 61 (377 aa).

A PPM-type phosphatase domain is found at 30-338; it reads AAGEFSMAAA…DDITAVVVFL (309 aa). D64, G65, D269, and D329 together coordinate Mn(2+).

Belongs to the PP2C family. Mg(2+) serves as cofactor. Requires Mn(2+) as cofactor.

It carries out the reaction O-phospho-L-seryl-[protein] + H2O = L-seryl-[protein] + phosphate. The catalysed reaction is O-phospho-L-threonyl-[protein] + H2O = L-threonyl-[protein] + phosphate. In Oryza sativa subsp. japonica (Rice), this protein is Probable protein phosphatase 2C 61.